The primary structure comprises 177 residues: Ribulose bisphosphate carboxylase small subunit, chloroplastic 4 (177 aa).

The N-terminal 56 residues, 1-56, are a transit peptide targeting the chloroplast; that stretch reads MASSMMASTAAAVARAGPAQTNMVPFNACRSSVPFPATRKANNDLSTLPSNGGRVS.

The protein belongs to the RuBisCO small chain family. In terms of assembly, heterohexadecamer of 8 large and 8 small subunits.

It localises to the plastid. The protein resides in the chloroplast. Its function is as follows. RuBisCO catalyzes two reactions: the carboxylation of D-ribulose 1,5-bisphosphate, the primary event in carbon dioxide fixation, as well as the oxidative fragmentation of the pentose substrate. Both reactions occur simultaneously and in competition at the same active site. Although the small subunit is not catalytic it is essential for maximal activity. This chain is Ribulose bisphosphate carboxylase small subunit, chloroplastic 4, found in Lemna gibba (Swollen duckweed).